The chain runs to 296 residues: PYK10-binding protein 2 (296 aa).

A disordered region spans residues 1 to 20; sequence MAQKVEAKGGKGGNQWDDGS. Ala2 is modified (N-acetylalanine). 2 Jacalin-type lectin domains span residues 2 to 142 and 150 to 293; these read AQKV…YFAP and AKPL…HVRP.

The protein belongs to the jacalin lectin family. In terms of assembly, component of the PYK10 complex, at least composed of PYK10/BGLU23, BGLU21, BGLU22, JAL22, JAL23, PBP1/JAL30, PBP2/JAL31, JAL32, JAL33, JAL34, JAL35, GLL22 and GLL23.

Polymerizer-type lectin that may facilitate the correct polymerization of BGLU23/PYK10 upon tissue damage. Activates BGLU21, BGLU22 and BGLU23. In Arabidopsis thaliana (Mouse-ear cress), this protein is PYK10-binding protein 2 (PBP2).